The primary structure comprises 201 residues: IMP cyclohydrolase (201 aa).

This sequence belongs to the archaeal IMP cyclohydrolase family.

The enzyme catalyses IMP + H2O = 5-formamido-1-(5-phospho-D-ribosyl)imidazole-4-carboxamide. It functions in the pathway purine metabolism; IMP biosynthesis via de novo pathway; IMP from 5-formamido-1-(5-phospho-D-ribosyl)imidazole-4-carboxamide: step 1/1. In terms of biological role, catalyzes the cyclization of 5-formylamidoimidazole-4-carboxamide ribonucleotide to IMP. The polypeptide is IMP cyclohydrolase (Methanocella arvoryzae (strain DSM 22066 / NBRC 105507 / MRE50)).